A 486-amino-acid chain; its full sequence is ATP synthase subunit beta (486 aa).

Gly-170–Thr-177 contributes to the ATP binding site.

Belongs to the ATPase alpha/beta chains family. In terms of assembly, F-type ATPases have 2 components, CF(1) - the catalytic core - and CF(0) - the membrane proton channel. CF(1) has five subunits: alpha(3), beta(3), gamma(1), delta(1), epsilon(1). CF(0) has three main subunits: a(1), b(2) and c(9-12). The alpha and beta chains form an alternating ring which encloses part of the gamma chain. CF(1) is attached to CF(0) by a central stalk formed by the gamma and epsilon chains, while a peripheral stalk is formed by the delta and b chains.

It localises to the cell membrane. The catalysed reaction is ATP + H2O + 4 H(+)(in) = ADP + phosphate + 5 H(+)(out). Produces ATP from ADP in the presence of a proton gradient across the membrane. The catalytic sites are hosted primarily by the beta subunits. The protein is ATP synthase subunit beta of Clavibacter sepedonicus (Clavibacter michiganensis subsp. sepedonicus).